A 462-amino-acid polypeptide reads, in one-letter code: tRNA(Ile)-lysidine synthase (462 aa).

Position 26-31 (26-31) interacts with ATP; that stretch reads SGGVDS.

It belongs to the tRNA(Ile)-lysidine synthase family.

The protein localises to the cytoplasm. It catalyses the reaction cytidine(34) in tRNA(Ile2) + L-lysine + ATP = lysidine(34) in tRNA(Ile2) + AMP + diphosphate + H(+). In terms of biological role, ligates lysine onto the cytidine present at position 34 of the AUA codon-specific tRNA(Ile) that contains the anticodon CAU, in an ATP-dependent manner. Cytidine is converted to lysidine, thus changing the amino acid specificity of the tRNA from methionine to isoleucine. The protein is tRNA(Ile)-lysidine synthase of Enterococcus faecalis (strain ATCC 700802 / V583).